A 505-amino-acid polypeptide reads, in one-letter code: Mannosylglucosyl-3-phosphoglycerate synthase (505 aa).

Monomer in solution.

It catalyses the reaction (2R)-2-O-(alpha-D-glucopyranosyl)-3-phospho-glycerate + GDP-alpha-D-mannose = (2R)-2-O-[alpha-D-mannopyranosyl-(1-&gt;2)-alpha-D-glucopyranosyl]-3-phospho-glycerate + GDP + H(+). With respect to regulation, not strictly dependent on divalent cations, but the presence of Mn(2+), Ca(2+), Mg(2+) or Co(2+) stimulates activity. Involved in the biosynthesis of the compatible solute mannosylglucosylglycerate through a phosphorylating pathway. Catalyzes the conversion of glucosyl-3-phosphoglycerate (GPG) to mannosylglucosyl-3-phosphoglycerate (MGPG). The protein is Mannosylglucosyl-3-phosphoglycerate synthase of Petrotoga mobilis (strain DSM 10674 / SJ95).